Consider the following 284-residue polypeptide: Pseudopaline exporter CntI (284 aa).

10 helical membrane-spanning segments follow: residues 2–22 (VLDL…TFSV), 34–54 (LPAA…IYLL), 74–94 (GVMG…IPLA), 96–116 (ASIL…LFLG), 122–142 (AVYW…KPFS), 147–167 (SVYA…SVAI), 179–199 (IVFY…WNDF), 209–229 (GLLL…TRAF), 236–256 (IVAV…WLFW), and 259–279 (VPDA…IALS). EamA domains are found at residues 8–138 (SGVL…LMIV) and 151–279 (VVGL…IALS).

This sequence belongs to the EamA transporter family.

It is found in the cell inner membrane. In terms of biological role, transports the metallophore pseudopaline, which is involved in the acquisition of nickel and zinc, and thus enables bacterial growth inside the host, where metal access is limited. Is probably involved in the export of pseudopaline. Essential for iron acquisition during the interaction with airway mucus secretions (AMS). This chain is Pseudopaline exporter CntI, found in Pseudomonas aeruginosa (strain ATCC 15692 / DSM 22644 / CIP 104116 / JCM 14847 / LMG 12228 / 1C / PRS 101 / PAO1).